Reading from the N-terminus, the 489-residue chain is MFS-type transporter MFS19 (489 aa).

Basic and acidic residues predominate over residues 1–12 (MAHSTAGDRDPE). Residues 1–42 (MAHSTAGDRDPEVGSEQHSSIAQLHTESMSDPWGDSNSPENP) form a disordered region. The span at 16-41 (EQHSSIAQLHTESMSDPWGDSNSPEN) shows a compositional bias: polar residues. Residues 52–72 (FHVAIVSIFTLTANLAATMFA) traverse the membrane as a helical segment. N-linked (GlcNAc...) asparagine glycans are attached at residues asparagine 83 and asparagine 86. 11 consecutive transmembrane segments (helical) span residues 91–111 (AMTV…LAPL), 127–147 (VYIA…FLVF), 149–169 (FLCG…VADI), 180–200 (ALFA…GGYV), 208–228 (WTFR…MFFM), 282–302 (PIVL…FLLF), 321–341 (GLAY…FSIL), 361–381 (LILM…YGWS), 388–408 (WIVP…VVIP), 425–445 (ALAA…LVAA), and 454–474 (GWGN…PWLF).

It belongs to the major facilitator superfamily.

It localises to the cell membrane. In terms of biological role, MFS-type efflux pump involved in the modulation susceptibility to various compounds including cumyl hydroperoxide, potassium superoxide, many singlet oxygen-generating compounds (eosin Y, rose Bengal, hematoporphyrin, methylene blue, and cercosporin), and the cell wall biosynthesis inhibitor Congo red. Involved in oxidative stress tolerance, colonization, and lesion formation. The sequence is that of MFS-type transporter MFS19 from Alternaria alternata (Alternaria rot fungus).